Here is a 137-residue protein sequence, read N- to C-terminus: Large ribosomal subunit protein uL16 (137 aa).

The protein belongs to the universal ribosomal protein uL16 family. In terms of assembly, part of the 50S ribosomal subunit.

Functionally, binds 23S rRNA and is also seen to make contacts with the A and possibly P site tRNAs. In Anaplasma phagocytophilum (strain HZ), this protein is Large ribosomal subunit protein uL16.